The following is a 360-amino-acid chain: Type II methyltransferase M.BglII (360 aa).

Residues Thr-316–Val-341 form a disordered region. Positions Leu-326–Val-341 are enriched in basic and acidic residues.

The protein belongs to the N(4)/N(6)-methyltransferase family. N(4) subfamily.

It carries out the reaction a 2'-deoxycytidine in DNA + S-adenosyl-L-methionine = an N(4)-methyl-2'-deoxycytidine in DNA + S-adenosyl-L-homocysteine + H(+). Functionally, a beta subtype methylase, recognizes the double-stranded sequence 5'-AGATCT-3', methylates C-5 on both strands, and protects the DNA from cleavage by the BglII endonuclease. This chain is Type II methyltransferase M.BglII, found in Bacillus subtilis.